Consider the following 431-residue polypeptide: Probable ganciclovir kinase (431 aa).

One can recognise a Protein kinase domain in the interval 79–368 (PQEDAVLGSG…KLSIGIDSFG (290 aa)). Residues 85-93 (LGSGSFGSV) and Lys-103 contribute to the ATP site. Catalysis depends on Asp-195, which acts as the Proton acceptor.

Belongs to the protein kinase superfamily. Tyr protein kinase family. HCMV ganciclovir subfamily.

Its function is as follows. Phosphorylates the antiviral nucleoside analog ganciclovir. In Saimiriine herpesvirus 2 (strain 11) (SaHV-2), this protein is Probable ganciclovir kinase (36).